A 364-amino-acid chain; its full sequence is 4-hydroxy-3-methylbut-2-en-1-yl diphosphate synthase (flavodoxin) (364 aa).

Residues C268, C271, C303, and E310 each contribute to the [4Fe-4S] cluster site.

The protein belongs to the IspG family. Requires [4Fe-4S] cluster as cofactor.

The catalysed reaction is (2E)-4-hydroxy-3-methylbut-2-enyl diphosphate + oxidized [flavodoxin] + H2O + 2 H(+) = 2-C-methyl-D-erythritol 2,4-cyclic diphosphate + reduced [flavodoxin]. Its pathway is isoprenoid biosynthesis; isopentenyl diphosphate biosynthesis via DXP pathway; isopentenyl diphosphate from 1-deoxy-D-xylulose 5-phosphate: step 5/6. Functionally, converts 2C-methyl-D-erythritol 2,4-cyclodiphosphate (ME-2,4cPP) into 1-hydroxy-2-methyl-2-(E)-butenyl 4-diphosphate. The chain is 4-hydroxy-3-methylbut-2-en-1-yl diphosphate synthase (flavodoxin) from Anoxybacillus flavithermus (strain DSM 21510 / WK1).